We begin with the raw amino-acid sequence, 967 residues long: Putative helicase MOV-10 (967 aa).

Residues 85–117 (ADQYRRPRTDTEVSAPAPGQQPSSGPPAPQSRA) are disordered. Residues 98–107 (SAPAPGQQPS) show a composition bias toward low complexity. 516 to 523 (GPPGTGKT) is a binding site for ATP. A DEAG box motif is present at residues 638–641 (DECG).

Belongs to the DNA2/NAM7 helicase family. SDE3 subfamily.

It is found in the cytoplasm. The protein localises to the P-body. Its subcellular location is the cytoplasmic ribonucleoprotein granule. The protein resides in the stress granule. It localises to the nucleus. The enzyme catalyses ATP + H2O = ADP + phosphate + H(+). 5' to 3' RNA helicase that is involved in a number of cellular roles ranging from mRNA metabolism and translation, modulation of viral infectivity, inhibition of retrotransposition, or regulation of synaptic transmission. Plays an important role in innate antiviral immunity by promoting type I interferon production. Required for microRNA (miRNA)-mediated gene silencing by the RNA-induced silencing complex (RISC). Required for both miRNA-mediated translational repression and miRNA-mediated cleavage of complementary mRNAs by RISC. In cooperation with FMR1, regulates miRNA-mediated translational repression by AGO2. Restricts retrotransposition of long interspersed element-1 (LINE-1). Required for embryonic viability and for normal central nervous system development and function. May function as a messenger ribonucleoprotein (mRNP) clearance factor. The polypeptide is Putative helicase MOV-10 (MOV10) (Gallus gallus (Chicken)).